The primary structure comprises 135 residues: Peptide methionine sulfoxide reductase MsrB (135 aa).

Residues 9 to 131 (DDYWRSKLTD…NSASIQFEEE (123 aa)) form the MsrB domain. Residues C48, C51, C97, and C100 each coordinate Zn(2+). The active-site Nucleophile is the C120.

The protein belongs to the MsrB Met sulfoxide reductase family. It depends on Zn(2+) as a cofactor.

It carries out the reaction L-methionyl-[protein] + [thioredoxin]-disulfide + H2O = L-methionyl-(R)-S-oxide-[protein] + [thioredoxin]-dithiol. The chain is Peptide methionine sulfoxide reductase MsrB from Teredinibacter turnerae (strain ATCC 39867 / T7901).